The following is an 82-amino-acid chain: MGREFGNLTRMRHVITYSLSPFEQRAFPHYFSKGIPNVLRRMRACVLRVVPPFVAFYLVYTWGTQEFENSKRKNPAAYENDK.

The Mitochondrial matrix segment spans residues 1-39; the sequence is MGREFGNLTRMRHVITYSLSPFEQRAFPHYFSKGIPNVL. Lys-33 carries the post-translational modification N6-acetyllysine; alternate. Lys-33 carries the post-translational modification N6-succinyllysine; alternate. Residues 40–68 form a helical membrane-spanning segment; that stretch reads RRMRACVLRVVPPFVAFYLVYTWGTQEFE. The Mitochondrial intermembrane portion of the chain corresponds to 69–82; that stretch reads NSKRKNPAAYENDK.

This sequence belongs to the UQCRQ/QCR8 family. Component of the ubiquinol-cytochrome c oxidoreductase (cytochrome b-c1 complex, complex III, CIII), a multisubunit enzyme composed of 11 subunits. The complex is composed of 3 respiratory subunits cytochrome b, cytochrome c1 and Rieske protein UQCRFS1, 2 core protein subunits UQCRC1/QCR1 and UQCRC2/QCR2, and 6 low-molecular weight protein subunits UQCRH/QCR6, UQCRB/QCR7, UQCRQ/QCR8, UQCR10/QCR9, UQCR11/QCR10 and subunit 9, the cleavage product of Rieske protein UQCRFS1. The complex exists as an obligatory dimer and forms supercomplexes (SCs) in the inner mitochondrial membrane with NADH-ubiquinone oxidoreductase (complex I, CI) and cytochrome c oxidase (complex IV, CIV), resulting in different assemblies (supercomplex SCI(1)III(2)IV(1) and megacomplex MCI(2)III(2)IV(2)). Interacts with UQCC6.

The protein resides in the mitochondrion inner membrane. Component of the ubiquinol-cytochrome c oxidoreductase, a multisubunit transmembrane complex that is part of the mitochondrial electron transport chain which drives oxidative phosphorylation. The respiratory chain contains 3 multisubunit complexes succinate dehydrogenase (complex II, CII), ubiquinol-cytochrome c oxidoreductase (cytochrome b-c1 complex, complex III, CIII) and cytochrome c oxidase (complex IV, CIV), that cooperate to transfer electrons derived from NADH and succinate to molecular oxygen, creating an electrochemical gradient over the inner membrane that drives transmembrane transport and the ATP synthase. The cytochrome b-c1 complex catalyzes electron transfer from ubiquinol to cytochrome c, linking this redox reaction to translocation of protons across the mitochondrial inner membrane, with protons being carried across the membrane as hydrogens on the quinol. In the process called Q cycle, 2 protons are consumed from the matrix, 4 protons are released into the intermembrane space and 2 electrons are passed to cytochrome c. This Ailuropoda melanoleuca (Giant panda) protein is Cytochrome b-c1 complex subunit 8 (UQCRQ).